A 428-amino-acid polypeptide reads, in one-letter code: Histidine--tRNA ligase (428 aa).

The protein belongs to the class-II aminoacyl-tRNA synthetase family. In terms of assembly, homodimer.

The protein resides in the cytoplasm. The catalysed reaction is tRNA(His) + L-histidine + ATP = L-histidyl-tRNA(His) + AMP + diphosphate + H(+). The sequence is that of Histidine--tRNA ligase from Bordetella bronchiseptica (strain ATCC BAA-588 / NCTC 13252 / RB50) (Alcaligenes bronchisepticus).